The chain runs to 176 residues: Japanin-like-RS (176 aa).

The N-terminal stretch at 1–24 (MKVLLCLVCSFYIIVSSITTMTTG) is a signal peptide. 2 cysteine pairs are disulfide-bonded: cysteine 52–cysteine 174 and cysteine 138–cysteine 162. The N-linked (GlcNAc...) asparagine glycan is linked to asparagine 155.

Belongs to the calycin superfamily. Lipocalin family. In terms of assembly, homodimer; non-disulfide-linked. Each monomer accommodates one molecule of cholesterol in a pocket. As to expression, expressed in salivary glands.

It is found in the secreted. Functionally, salivary tick protein that modulates host immune response. This protein blocks dendritic cell (DC) differentiation from monocytes. In addition, it inhibits up-regulation of costimulatory molecules and pro-inflammatory cytokines in response to stimuli and promotes up-regulation of co-inhibitory molecules and the anti-inflammatory cytokine interleukin-10. It has a pocket to accomodate cholesterol, which may have immune-modulatory roles, either directly or through interactions with the host gut microbiota. The chain is Japanin-like-RS from Rhipicephalus sanguineus (Brown dog tick).